A 385-amino-acid chain; its full sequence is Acetate kinase (385 aa).

Mg(2+) is bound at residue Asn9. Residue Lys16 participates in ATP binding. A substrate-binding site is contributed by Arg87. The active-site Proton donor/acceptor is Asp144. ATP is bound by residues 202–206 (HLGSG) and 277–279 (DIR). Glu373 provides a ligand contact to Mg(2+).

The protein belongs to the acetokinase family. Homodimer. Requires Mg(2+) as cofactor. Mn(2+) serves as cofactor.

The protein resides in the cytoplasm. The enzyme catalyses acetate + ATP = acetyl phosphate + ADP. The protein operates within metabolic intermediate biosynthesis; acetyl-CoA biosynthesis; acetyl-CoA from acetate: step 1/2. Its function is as follows. Catalyzes the formation of acetyl phosphate from acetate and ATP. Can also catalyze the reverse reaction. The polypeptide is Acetate kinase (Rickettsia akari (strain Hartford)).